Reading from the N-terminus, the 570-residue chain is MAIKEETEESCGSRAVVASITKESPRQHRMKLEVYGEVLQRIQESNYEEANFPGFDDLLWLHFNRLPARYALDVNVERAEDVLTHQRLLKLAEDPATRPVFEVRCVQVSPTLNGNSGDVDPSDPAVNEDAQSSYNSRSLAPPTFGSSPNFEALTQAYKDHAQDDDSAVNAQLPNSRPMHEITFSTIDRPKLLSQLTSMLGELGLNIQEAHAFSTADGFSLDVFVVDGWSQEETEGLKDALKKEIRKFKDQPCSKQKSITFFEHDKSTNELLPACVEIPTDGTDEWEIDMKQLKIEKKVACGSYGELFRGTYCSQEVAIKILKPERVNAEMLREFSQEVYIMRKVRHKNVVQFIGACTRSPNLCIVTEFMTRGSIYDFLHKHKGVFKIQSLLKVALDVSKGMNYLHQNNIIHRDLKTANLLMDEHEVVKVADFGVARVQTESGVMTAETGTYRWMAPEVIEHKPYDHRADVFSYAIVLWELLTGELPYSYLTPLQAAVGVVQKGLRPKIPKETHPKLTELLEKCWQQDPALRPNFAEIIEMLNQLIREVGDDERHKDKHGGYFSGLKKGHR.

Residues 112-145 (LNGNSGDVDPSDPAVNEDAQSSYNSRSLAPPTFG) form a disordered region. The span at 129-145 (DAQSSYNSRSLAPPTFG) shows a compositional bias: polar residues. The region spanning 180 to 260 (EITFSTIDRP…PCSKQKSITF (81 aa)) is the ACT domain. In terms of domain architecture, Protein kinase spans 292–545 (LKIEKKVACG…EIIEMLNQLI (254 aa)). Residues 298–306 (VACGSYGEL) and Lys-319 contribute to the ATP site. The active-site Proton acceptor is Asp-413. Phosphoserine is present on Ser-441. Phosphothreonine is present on Thr-445.

It belongs to the protein kinase superfamily. Ser/Thr protein kinase family. Post-translationally, autophosphorylated on serine and threonine residues. Autophosphorylated at Thr-445.

It is found in the cytoplasm. The protein localises to the cytosol. The catalysed reaction is L-seryl-[protein] + ATP = O-phospho-L-seryl-[protein] + ADP + H(+). The enzyme catalyses L-threonyl-[protein] + ATP = O-phospho-L-threonyl-[protein] + ADP + H(+). With respect to regulation, activated by autophosphorylation at Thr-445. Functionally, serine/threonine protein kinase that specifically phosphorylates chloroplast precursor proteins in the cytosol within the cleavable presequences (transit peptides). May be part of a cytosolic regulatory network involved in chloroplast protein import. Does not phosphorylate mitochondrion precursor proteins. Specific for ATP and does not utilize other NTPs. Plays a role in chloroplast biogenesis and differentiation in cotyledons, possibly through phosphorylation of chloroplast preproteins. This chain is Serine/threonine-protein kinase STY17, found in Arabidopsis thaliana (Mouse-ear cress).